We begin with the raw amino-acid sequence, 347 residues long: Nuclear distribution protein nudE-like 1 (347 aa).

Positions 28 to 190 (QSFQEARDEL…LAVRERQQEV (163 aa)) form a coiled coil. The tract at residues 56–166 (VQAEQRNRDL…LDEKESLLVS (111 aa)) is self-association. Residues 64 to 189 (DLQADNQRLK…ELAVRERQQE (126 aa)) form an interaction with KATNB1 region. A required for interaction with PAFAH1B1 region spans residues 114–133 (YVRELEQANDDLERAKRATI). The interval 175–347 (RDLRQELAVR…SAPGMLPLSV (173 aa)) is interaction with CENPF. The interval 189–256 (EVTRKSAPSS…SARISALNIV (68 aa)) is interaction with YWHAE. The tract at residues 191-347 (TRKSAPSSPT…SAPGMLPLSV (157 aa)) is interaction with NEFL. An interaction with KATNA1 region spans residues 195–256 (APSSPTLDCE…SARISALNIV (62 aa)). Position 215 is a phosphoserine (Ser215). Phosphothreonine; by CDK1 and MAPK1 is present on Thr219. Position 231 is a phosphoserine (Ser231). The interval 241-280 (TSPLTPSARISALNIVGDLLRKVGALESKLAACRNFAKDQ) is interaction with DISC1. Phosphoserine; by CDK1 is present on Ser242. A Phosphothreonine; by CDK1 and MAPK1 modification is found at Thr245. The segment at 256–291 (VGDLLRKVGALESKLAACRNFAKDQASRKSYISGNV) is required for localization to the centrosome and interaction with dynein, dynactin, tubulin gamma, PCM1 and PCNT. A lipid anchor (S-palmitoyl cysteine; by ZDHHC2, ZDHHC3 and ZDHHC7) is attached at Cys273. Residues 314 to 347 (KGAVNGFDPAPPPPDPGLGSSRPSSAPGMLPLSV) are disordered. At Ser346 the chain carries Phosphoserine.

It belongs to the nudE family. In terms of assembly, self-associates. Interacts with DISC1, dynein, dynactin, tubulin gamma, KATNA1, KATNB1, microtubules, PAFAH1B1, PCM1, PCNT, and YWHAE. Interacts directly with NEFL and indirectly with NEFH. Interacts (via C-terminus) with CENPF. Interacts with ZNF365. Interacts with PLEKHM1 (via N- and C-terminus). Interacts with GTP-bound RAB9A; the interaction may lead to RAB9A-dynein motor tethering. Phosphorylated in mitosis. Can be phosphorylated by CDK1, CDK5 and MAPK1. Phosphorylation by CDK5 promotes interaction with KATNA1 and YWHAE. Post-translationally, palmitoylation at Cys-273 reduces affinity for dynein.

The protein resides in the cytoplasm. The protein localises to the cytoskeleton. It is found in the microtubule organizing center. It localises to the centrosome. Its subcellular location is the chromosome. The protein resides in the centromere. The protein localises to the kinetochore. It is found in the spindle. Its function is as follows. Required for organization of the cellular microtubule array and microtubule anchoring at the centrosome. May regulate microtubule organization at least in part by targeting the microtubule severing protein KATNA1 to the centrosome. Also positively regulates the activity of the minus-end directed microtubule motor protein dynein. May enhance dynein-mediated microtubule sliding by targeting dynein to the microtubule plus ends. Required for several dynein- and microtubule-dependent processes such as the maintenance of Golgi integrity, the centripetal motion of secretory vesicles and the coupling of the nucleus and centrosome. Also required during brain development for the migration of newly formed neurons from the ventricular/subventricular zone toward the cortical plate. Required for mitosis in some cell types but appears to be dispensible for mitosis in cortical neuronal progenitors, which instead requires NDE1. Facilitates the polymerization of neurofilaments from the individual subunits NEFH and NEFL. Positively regulates lysosome peripheral distribution and ruffled border formation in osteoclasts. Plays a role, together with DISC1, in the regulation of neurite outgrowth. May act as a RAB9A/B effector that tethers RAB9-associated late endosomes to the dynein motor for their retrograde transport to the trans-Golgi network. The chain is Nuclear distribution protein nudE-like 1 (NDEL1) from Macaca fascicularis (Crab-eating macaque).